The following is a 416-amino-acid chain: uncharacterized protein (416 aa).

The region spanning 3 to 150 (LDVRTITPSE…SVYRAGLDAR (148 aa)) is the N-acetyltransferase domain. Residues 83 to 85 (VTV) and 91 to 96 (RRGLLS) each bind acetyl-CoA. Tyr124 serves as the catalytic Proton donor. Phe416 (proton acceptor; via carboxylate) is an active-site residue.

It belongs to the acetyltransferase Eis family. In terms of assembly, homohexamer; trimer of dimers.

This is an uncharacterized protein from Streptomyces griseus subsp. griseus (strain JCM 4626 / CBS 651.72 / NBRC 13350 / KCC S-0626 / ISP 5235).